Consider the following 270-residue polypeptide: Putative pyruvate, phosphate dikinase regulatory protein 1 (270 aa).

G151 to T158 lines the ADP pocket.

This sequence belongs to the pyruvate, phosphate/water dikinase regulatory protein family. PDRP subfamily.

The enzyme catalyses N(tele)-phospho-L-histidyl/L-threonyl-[pyruvate, phosphate dikinase] + ADP = N(tele)-phospho-L-histidyl/O-phospho-L-threonyl-[pyruvate, phosphate dikinase] + AMP + H(+). It carries out the reaction N(tele)-phospho-L-histidyl/O-phospho-L-threonyl-[pyruvate, phosphate dikinase] + phosphate + H(+) = N(tele)-phospho-L-histidyl/L-threonyl-[pyruvate, phosphate dikinase] + diphosphate. Bifunctional serine/threonine kinase and phosphorylase involved in the regulation of the pyruvate, phosphate dikinase (PPDK) by catalyzing its phosphorylation/dephosphorylation. The polypeptide is Putative pyruvate, phosphate dikinase regulatory protein 1 (Enterococcus faecalis (strain ATCC 700802 / V583)).